We begin with the raw amino-acid sequence, 611 residues long: Podocan (611 aa).

A signal peptide spans 1 to 23; the sequence is MAGSRGLPLLLLVLQLFLGPVLP. An LRRNT domain is found at 60–97; the sequence is PEPGPATVDCPRDCACSQEGVVDCGGIDLREFPGDLPE. LRR repeat units follow at residues 98 to 119, 122 to 145, 148 to 169, 170 to 190, and 193 to 213; these read HTNHLSLQNNQLEKIYPEELSR, RLETLNLQNNRLTSRGLPEEAFEH, SLNYLYLANNKLTLAPRFLPNA, LISVDFAANYLTKIYGLTFGQ, and NLRSVYLHNNKLADAGLPDHM. A glycan (N-linked (GlcNAc...) asparagine) is linked at Asn215. LRR repeat units lie at residues 219–239, 240–261, 264–284, 290–311, 312–332, 335–358, 361–382, 383–403, 406–427, 432–453, 477–490, 503–523, 524–545, 548–569, and 574–583; these read NVEILILSSNFLRHVPKHLPP, ALYKLHLKNNKLEKIPPGAFSE, NLRELYLQNNYLTDEGLDNET, SLEYLDLSSNNLSRVPAGLPRS, LVLLHLEKNAIQSVEADVLTP, NLEYLLLHSNQLQAKGIHPLAFQG, KLHTVHLYNNALERVPSGLPRR, VRTLMILHNQITGIGREDFAT, FLEELNLSYNRITSPQMHRDAF, LLRSLDLSGNRLQTLPPGLPKN, QLRELYLTGNRLRS, GLQLLDIAGNQLTEVPEGLPP, SLEYLYLQNNKISAVPANAFDS, NLKGIFLRFNKLAVGSVVESAF, and HLQVLDIEGN. A glycan (N-linked (GlcNAc...) asparagine) is linked at Asn282. Asn411 is a glycosylation site (N-linked (GlcNAc...) asparagine). The disordered stretch occupies residues 585 to 611; the sequence is EFGNGSKDKDEEEEEEEEEEDEEEETR. Acidic residues predominate over residues 594 to 611; it reads DEEEEEEEEEEDEEEETR.

It belongs to the small leucine-rich proteoglycan (SLRP) family. SLRP class V subfamily. In terms of assembly, binds to type I collagen. Post-translationally, N-glycosylated. As to expression, kidney. Expressed in podocytes and likely vascular endothelial cells within the glomerulus.

The protein localises to the secreted. Its subcellular location is the extracellular space. It localises to the extracellular matrix. Negatively regulates cell proliferation and cell migration, especially in smooth muscle cells. This is Podocan (Podn) from Mus musculus (Mouse).